We begin with the raw amino-acid sequence, 423 residues long: AUGMIN subunit 4 (423 aa).

The stretch at 267–287 (IEEIERDEAALREDLYSADRK) forms a coiled coil.

This sequence belongs to the HAUS4 family. As to quaternary structure, part of the augmin complex composed of 8 subunits. The complex acts on microtubules and interacts with gamma-tubulin in spindles and the phragmoplast.

It localises to the cytoplasm. Its subcellular location is the cytoskeleton. The protein resides in the spindle. The protein localises to the phragmoplast. Functionally, involved in microtubules reorganization during spindle and phragmoplast development. In Arabidopsis thaliana (Mouse-ear cress), this protein is AUGMIN subunit 4 (AUG4).